Reading from the N-terminus, the 685-residue chain is DNA ligase (685 aa).

NAD(+) is bound by residues 47–51 (DSEYD), 96–97 (SL), and E125. The active-site N6-AMP-lysine intermediate is the K127. NAD(+)-binding residues include R148, E185, K304, and K328. Zn(2+) is bound by residues C422, C425, C440, and C446. Residues 605 to 685 (ADAQPLKGQT…ALLALFAANR (81 aa)) enclose the BRCT domain.

The protein belongs to the NAD-dependent DNA ligase family. LigA subfamily. Requires Mg(2+) as cofactor. The cofactor is Mn(2+).

The enzyme catalyses NAD(+) + (deoxyribonucleotide)n-3'-hydroxyl + 5'-phospho-(deoxyribonucleotide)m = (deoxyribonucleotide)n+m + AMP + beta-nicotinamide D-nucleotide.. DNA ligase that catalyzes the formation of phosphodiester linkages between 5'-phosphoryl and 3'-hydroxyl groups in double-stranded DNA using NAD as a coenzyme and as the energy source for the reaction. It is essential for DNA replication and repair of damaged DNA. The polypeptide is DNA ligase (Shewanella sp. (strain W3-18-1)).